Here is a 334-residue protein sequence, read N- to C-terminus: D-fructose 1,6-bisphosphatase class 2/sedoheptulose 1,7-bisphosphatase (334 aa).

Positions 33, 57, 85, and 88 each coordinate Mn(2+). Residues 88–90 (EGT), Y119, 164–166 (RAR), and 186–188 (DGD) contribute to the substrate site. Residue E213 coordinates Mn(2+).

This sequence belongs to the FBPase class 2 family. In terms of assembly, homotetramer. Requires Mn(2+) as cofactor.

It catalyses the reaction beta-D-fructose 1,6-bisphosphate + H2O = beta-D-fructose 6-phosphate + phosphate. It carries out the reaction D-sedoheptulose 1,7-bisphosphate + H2O = D-sedoheptulose 7-phosphate + phosphate. Its pathway is carbohydrate biosynthesis; Calvin cycle. Catalyzes the hydrolysis of fructose 1,6-bisphosphate (Fru 1,6-P2) and sedoheptulose 1,7-bisphosphate (Sed 1,7-P2) to fructose 6-phosphate and sedoheptulose 7-phosphate, respectively. In Synechococcus sp. (strain RCC307), this protein is D-fructose 1,6-bisphosphatase class 2/sedoheptulose 1,7-bisphosphatase.